We begin with the raw amino-acid sequence, 597 residues long: Arginine--tRNA ligase (597 aa).

Positions 125–135 (PNTNKPLHLGH) match the 'HIGH' region motif.

It belongs to the class-I aminoacyl-tRNA synthetase family. Monomer.

It is found in the cytoplasm. It carries out the reaction tRNA(Arg) + L-arginine + ATP = L-arginyl-tRNA(Arg) + AMP + diphosphate. The chain is Arginine--tRNA ligase from Porphyromonas gingivalis (strain ATCC 33277 / DSM 20709 / CIP 103683 / JCM 12257 / NCTC 11834 / 2561).